A 242-amino-acid polypeptide reads, in one-letter code: MNENLENFSTIDLLNELKRRYACLSKPDGRYIFLGAPGSGKGTQSLNLKKSHCYCHLSTGDLLREAAEKKTELGLKIKNIINEGKLVDDQMVLSLVDEKLKTPQCKKGFILDGYPRNVKQAEDLNKLLQKNQTKLDGVFYFNVPDEVLVNRISGRLIHKPSGRIYHKIFNPPKVPFRDDVTNEPLIQREDDNEDVLKKRLTVFKSETSPLISYYKNKNLLINLDATQPANDLEKKISQHIDG.

Residues 38–43 (GSGKGT) and Gly-42 each bind ATP. Residues 58 to 87 (STGDLLREAAEKKTELGLKIKNIINEGKLV) are NMP. Residues Thr-59, Arg-64, 85–87 (KLV), Gly-113, 113–116 (GYPR), and Gln-120 contribute to the AMP site. Residues 154 to 191 (GRLIHKPSGRIYHKIFNPPKVPFRDDVTNEPLIQREDD) form an LID region. Residues Arg-155 and Tyr-165 each coordinate ATP. Arg-199 is an AMP binding site. An ATP-binding site is contributed by Ala-229.

The protein belongs to the adenylate kinase family.

The protein localises to the cytoplasm. The catalysed reaction is AMP + ATP = 2 ADP. Inhibited by the dinucleoside pentaphosphate compound P1,P5-di(adenosine-5') pentaphosphate (AP5A). Functionally, catalyzes the reversible transfer of the terminal phosphate group between ATP and AMP. Has very low activity with CTP, GTP, ITP and UTP and no activity with GMP, CMP, UMP or IMP in vitro. In Plasmodium falciparum (isolate 3D7), this protein is Adenylate kinase 1.